A 366-amino-acid chain; its full sequence is Peptide chain release factor 2 (366 aa).

Gln-246 bears the N5-methylglutamine mark.

This sequence belongs to the prokaryotic/mitochondrial release factor family. Post-translationally, methylated by PrmC. Methylation increases the termination efficiency of RF2.

The protein localises to the cytoplasm. Its function is as follows. Peptide chain release factor 2 directs the termination of translation in response to the peptide chain termination codons UGA and UAA. The polypeptide is Peptide chain release factor 2 (Frankia casuarinae (strain DSM 45818 / CECT 9043 / HFP020203 / CcI3)).